Here is a 457-residue protein sequence, read N- to C-terminus: Siroheme synthase (457 aa).

A precorrin-2 dehydrogenase /sirohydrochlorin ferrochelatase region spans residues M1–T204. NAD(+) contacts are provided by residues D22–V23 and L43–A44. S128 carries the phosphoserine modification. The uroporphyrinogen-III C-methyltransferase stretch occupies residues G216–H457. Position 225 (P225) interacts with S-adenosyl-L-methionine. The Proton acceptor role is filled by D248. K270 acts as the Proton donor in catalysis. Residues G301 to D303, I306, T331 to A332, M382, and G411 contribute to the S-adenosyl-L-methionine site.

This sequence in the N-terminal section; belongs to the precorrin-2 dehydrogenase / sirohydrochlorin ferrochelatase family. It in the C-terminal section; belongs to the precorrin methyltransferase family.

The catalysed reaction is uroporphyrinogen III + 2 S-adenosyl-L-methionine = precorrin-2 + 2 S-adenosyl-L-homocysteine + H(+). It carries out the reaction precorrin-2 + NAD(+) = sirohydrochlorin + NADH + 2 H(+). The enzyme catalyses siroheme + 2 H(+) = sirohydrochlorin + Fe(2+). It participates in cofactor biosynthesis; adenosylcobalamin biosynthesis; precorrin-2 from uroporphyrinogen III: step 1/1. It functions in the pathway cofactor biosynthesis; adenosylcobalamin biosynthesis; sirohydrochlorin from precorrin-2: step 1/1. The protein operates within porphyrin-containing compound metabolism; siroheme biosynthesis; precorrin-2 from uroporphyrinogen III: step 1/1. Its pathway is porphyrin-containing compound metabolism; siroheme biosynthesis; siroheme from sirohydrochlorin: step 1/1. It participates in porphyrin-containing compound metabolism; siroheme biosynthesis; sirohydrochlorin from precorrin-2: step 1/1. Its function is as follows. Multifunctional enzyme that catalyzes the SAM-dependent methylations of uroporphyrinogen III at position C-2 and C-7 to form precorrin-2 via precorrin-1. Then it catalyzes the NAD-dependent ring dehydrogenation of precorrin-2 to yield sirohydrochlorin. Finally, it catalyzes the ferrochelation of sirohydrochlorin to yield siroheme. In Escherichia coli O6:H1 (strain CFT073 / ATCC 700928 / UPEC), this protein is Siroheme synthase.